A 334-amino-acid polypeptide reads, in one-letter code: Trans-3-hydroxy-L-proline dehydratase (334 aa).

C91 functions as the Proton acceptor in the catalytic mechanism. Residues G92 to H93, D250, and G255 to T256 each bind substrate.

This sequence belongs to the proline racemase family.

It carries out the reaction trans-3-hydroxy-L-proline = 1-pyrroline-2-carboxylate + H2O. Catalyzes the dehydration of trans-3-hydroxy-L-proline (t3LHyp) to Delta(1)-pyrroline-2-carboxylate (Pyr2C). Is likely involved in a degradation pathway that converts t3LHyp to L-proline, which allows B.cereus to grow on t3LHyp as a sole carbon source. Displays no proline racemase activity. This Bacillus cereus (strain ATCC 14579 / DSM 31 / CCUG 7414 / JCM 2152 / NBRC 15305 / NCIMB 9373 / NCTC 2599 / NRRL B-3711) protein is Trans-3-hydroxy-L-proline dehydratase.